A 275-amino-acid polypeptide reads, in one-letter code: MAVASTFIPGLNPQNPHYIPGYTGHCPLLRFSVGQTYGQVTGQLLRGPPGLAWPPVHRTLLPPIRPPRSPEVPRESLPVRRGQERLSSSMIPGYTGFVPRAQFIFAKNCSQVWAEALSDFTHLHEKQGSEELPKEAKGRKDTEKDQVPEPEGQLEEPTLEVVEQASPYSMDDRDPRKFFMSGFTGYVPCARFLFGSSFPVLTNQALQEFGQKHSPGSAQDPKHLPPLPRTYPQNLGLLPNYGGYVPGYKFQFGHTFGHLTHDALGLSTFQKQLLA.

Disordered stretches follow at residues 62 to 84 (PPIRPPRSPEVPRESLPVRRGQE) and 125 to 169 (EKQG…SPYS). Composition is skewed to basic and acidic residues over residues 71–84 (EVPRESLPVRRGQE) and 125–147 (EKQGSEELPKEAKGRKDTEKDQV).

It belongs to the CIMIP2 family. In terms of assembly, microtubule inner protein component of sperm flagellar doublet microtubules. Expressed in airway epithelial cells.

It localises to the cytoplasm. It is found in the cytoskeleton. The protein resides in the cilium axoneme. The protein localises to the flagellum axoneme. In terms of biological role, microtubule inner protein (MIP) part of the dynein-decorated doublet microtubules (DMTs) in cilia axoneme, which is required for motile cilia beating. In Homo sapiens (Human), this protein is Ciliary microtubule inner protein 2B.